Reading from the N-terminus, the 305-residue chain is Tyrosine recombinase XerC (305 aa).

A Core-binding (CB) domain is found at 4 to 95; that stretch reads TQIQELIIKW…AIKNFYKFLE (92 aa). One can recognise a Tyr recombinase domain in the interval 116–298; that stretch reads LLPKALSEEE…SIKHLETAYV (183 aa). Active-site residues include arginine 159, lysine 182, histidine 250, arginine 253, and histidine 276. The active-site O-(3'-phospho-DNA)-tyrosine intermediate is tyrosine 285.

Belongs to the 'phage' integrase family. XerC subfamily. As to quaternary structure, forms a cyclic heterotetrameric complex composed of two molecules of XerC and two molecules of XerD.

The protein localises to the cytoplasm. Its function is as follows. Site-specific tyrosine recombinase, which acts by catalyzing the cutting and rejoining of the recombining DNA molecules. The XerC-XerD complex is essential to convert dimers of the bacterial chromosome into monomers to permit their segregation at cell division. It also contributes to the segregational stability of plasmids. This Rickettsia bellii (strain OSU 85-389) protein is Tyrosine recombinase XerC.